The chain runs to 390 residues: Lipid-A-disaccharide synthase (390 aa).

This sequence belongs to the LpxB family.

It carries out the reaction a lipid X + a UDP-2-N,3-O-bis[(3R)-3-hydroxyacyl]-alpha-D-glucosamine = a lipid A disaccharide + UDP + H(+). It functions in the pathway bacterial outer membrane biogenesis; LPS lipid A biosynthesis. Condensation of UDP-2,3-diacylglucosamine and 2,3-diacylglucosamine-1-phosphate to form lipid A disaccharide, a precursor of lipid A, a phosphorylated glycolipid that anchors the lipopolysaccharide to the outer membrane of the cell. This Haemophilus influenzae (strain ATCC 51907 / DSM 11121 / KW20 / Rd) protein is Lipid-A-disaccharide synthase (lpxB).